We begin with the raw amino-acid sequence, 491 residues long: Cytosolic Fe-S cluster assembly factor NAR1 (491 aa).

Cys-20, Cys-65, Cys-68, Cys-71, Cys-177, Cys-232, Cys-414, and Cys-418 together coordinate [4Fe-4S] cluster.

The protein belongs to the NARF family.

In terms of biological role, component of the cytosolic Fe/S protein assembly machinery. Required for maturation of extramitochondrial Fe/S proteins. May play a role in the transfer of pre-assembled Fe/S clusters to target apoproteins. In Yarrowia lipolytica (strain CLIB 122 / E 150) (Yeast), this protein is Cytosolic Fe-S cluster assembly factor NAR1 (NAR1).